The primary structure comprises 296 residues: Ribosomal protein L11 methyltransferase (296 aa).

4 residues coordinate S-adenosyl-L-methionine: T151, G172, D194, and N233.

The protein belongs to the methyltransferase superfamily. PrmA family.

The protein localises to the cytoplasm. The catalysed reaction is L-lysyl-[protein] + 3 S-adenosyl-L-methionine = N(6),N(6),N(6)-trimethyl-L-lysyl-[protein] + 3 S-adenosyl-L-homocysteine + 3 H(+). In terms of biological role, methylates ribosomal protein L11. This chain is Ribosomal protein L11 methyltransferase, found in Thiobacillus denitrificans (strain ATCC 25259 / T1).